The primary structure comprises 658 residues: MSHVVVKNDPELDQQLANLDLNSEKQSGGASTASKGRYIPPHLRNREASKGFHDKDSSGWSCSKDKDAYSSFGSRDSRGKSGYFSERGSGSRGRFDDRGRSDYDGIGNRDRPGFGRFERSGHSRWCDKSDEDDWSKPLPPSERLEQELFSGGNTGINFEKYDDIPVEATGSNCPPHIENFSDIDMGEIIMGNIELTRYTRPTPVQKHAIPIIKGKRDLMACAQTGSGKTAAFLLPILSQIYTDGPGEALKAVKENGRYGRRKQYPISLVLAPTRELAVQIYEEARKFSYRSRVRPCVVYGGADIGQQIRDLERGCHLLVATPGRLVDMMERGKIGLDFCKYLVLDEADRMLDMGFEPQIRRIVEQDTMPPKGVRHTMMFSATFPKEIQMLARDFLDEYIFLAVGRVGSTSENITQKVVWVEDLDKRSFLLDLLGATGRDSLTLVFVETKKGADSLEDFLYHEGYACTSIHGDRSQRDREEALHQFRSGKSPILVATAVAARGLDISNVRHVINFDLPSDIEEYVHRIGRTGRVGNLGLATSFFNEKNMNITKDLLDLLVEAKQEVPSWLENMAYEHHYKGGSRGRSKRFSGGFGARDYRQSSGSSSSGFGASRGSSSRSGGSGYGNSRGFGGGGYGGFYNSDGYGGNYNSQGVDWWGN.

Positions 1–10 (MSHVVVKNDP) are enriched in basic and acidic residues. The interval 1 to 141 (MSHVVVKNDP…DDWSKPLPPS (141 aa)) is disordered. Position 2 is an N-acetylserine (serine 2). A compositionally biased stretch (polar residues) spans 15 to 34 (QLANLDLNSEKQSGGASTAS). The span at 44–68 (RNREASKGFHDKDSSGWSCSKDKDA) shows a compositional bias: basic and acidic residues. Lysine 55 carries the N6-acetyllysine modification. Residues serine 81, serine 85, and serine 89 each carry the phosphoserine modification. A compositionally biased stretch (basic and acidic residues) spans 93-128 (GRFDDRGRSDYDGIGNRDRPGFGRFERSGHSRWCDK). At arginine 100 the chain carries Omega-N-methylarginine. Serine 101 carries the post-translational modification Phosphoserine. Phosphotyrosine is present on tyrosine 103. An Omega-N-methylarginine modification is found at arginine 109. A phosphoserine mark is found at serine 129 and serine 181. A Q motif motif is present at residues 178-206 (ENFSDIDMGEIIMGNIELTRYTRPTPVQK). An ATP-binding site is contributed by 198 to 205 (YTRPTPVQ). One can recognise a Helicase ATP-binding domain in the interval 209–401 (IPIIKGKRDL…RDFLDEYIFL (193 aa)). Residue lysine 213 forms a Glycyl lysine isopeptide (Lys-Gly) (interchain with G-Cter in SUMO2) linkage. Residue 222 to 229 (AQTGSGKT) coordinates ATP. The DEAD box motif lies at 345–348 (DEAD). The Helicase C-terminal domain maps to 412–573 (NITQKVVWVE…EVPSWLENMA (162 aa)). Residue serine 454 is modified to Phosphoserine. Arginine 588 carries the post-translational modification Omega-N-methylarginine. A phosphoserine mark is found at serine 590 and serine 601. The disordered stretch occupies residues 597-625 (DYRQSSGSSSSGFGASRGSSSRSGGSGYG). Positions 601–619 (SSGSSSSGFGASRGSSSRS) are enriched in low complexity. Omega-N-methylarginine is present on residues arginine 613 and arginine 628.

This sequence belongs to the DEAD box helicase family. DDX3/DED1 subfamily. In terms of assembly, may interact with TDRD3.

Its subcellular location is the cytoplasm. It is found in the nucleus. The enzyme catalyses ATP + H2O = ADP + phosphate + H(+). Its function is as follows. Probable ATP-dependent RNA helicase. May play a role in spermatogenesis. This chain is ATP-dependent RNA helicase DDX3Y (DDX3Y), found in Pongo abelii (Sumatran orangutan).